The chain runs to 700 residues: Cap-specific mRNA (nucleoside-2'-O-)-methyltransferase 2 (700 aa).

Positions 1 to 21 (MSFRSSPQGKPHPMTDYQSIR) are disordered. The region spanning 109-321 (EFVTVAWCKL…VYVICLNYNK (213 aa)) is the Adrift-type SAM-dependent 2'-O-MTase domain. Lys-117 is an active-site residue. Gly-143, Trp-164, and Asp-234 together coordinate S-adenosyl-L-methionine. The active site involves Asp-234. Lys-274 functions as the Proton acceptor in the catalytic mechanism.

Its subcellular location is the nucleus. It catalyses the reaction a 5'-end (N(7)-methyl 5'-triphosphoguanosine)-(2'-O-methyl-ribonucleoside)-(ribonucleotide) in mRNA + S-adenosyl-L-methionine = a 5'-end (N(7)-methyl 5'-triphosphoguanosine)-(2'-O-methyl-ribonucleoside)-(2'-O-methyl-ribonucleotide) in mRNA + S-adenosyl-L-homocysteine + H(+). In terms of biological role, probable S-adenosyl-L-methionine-dependent methyltransferase that mediates mRNA cap2 2'-O-ribose methylation to the 5'-cap structure of mRNAs. May methylate the ribose of the second nucleotide of a m(7)GpppG-capped mRNA (cap0) to produce m(7)GpppRmpNm (cap2). Regulates expression of tracheal genes required for pathfinding on the segmental nerve. The polypeptide is Cap-specific mRNA (nucleoside-2'-O-)-methyltransferase 2 (cmtr2) (Drosophila melanogaster (Fruit fly)).